The following is a 142-amino-acid chain: Small ribosomal subunit protein uS12 (142 aa).

Belongs to the universal ribosomal protein uS12 family. Part of the 30S ribosomal subunit.

With S4 and S5 plays an important role in translational accuracy. Located at the interface of the 30S and 50S subunits. The polypeptide is Small ribosomal subunit protein uS12 (Methanospirillum hungatei JF-1 (strain ATCC 27890 / DSM 864 / NBRC 100397 / JF-1)).